A 127-amino-acid chain; its full sequence is Dual endothelin-1/VEGF signal peptide receptor (127 aa).

Topologically, residues 1–65 (MNALYVTTVP…EMKSRWNWGS (65 aa)) are extracellular. Residues 66-84 (ITCIICFTCVGSQLSMSSS) traverse the membrane as a helical segment. At 85–127 (KASNFSGPLQLYQRGIGHITNSYKRPQAPAWPCLSSGTMGRSH) the chain is on the cytoplasmic side.

As to expression, widely expressed with higher levels in kidney and aorta.

Its subcellular location is the cell membrane. Functionally, dual receptor for both endothelin-1 and the signal sequence of vascular endothelial growth factor A. Does not act as a receptor for angiotensin-2. Does not bind the VEGFA mature protein. May play a role in angiogenesis with a significant role in cardiovascular and neural development. The polypeptide is Dual endothelin-1/VEGF signal peptide receptor (Mus musculus (Mouse)).